Reading from the N-terminus, the 115-residue chain is MPKSTNSVASKARRKRILNKAKGYWGSRGNVLTVVKHAVDKAEQYAYRDRRVKKRTFRSLWIMRINAAARQNGVSYSRLMDAIHKKNIEIDRKALAEIAVKDPEAFAMIVKSALD.

Belongs to the bacterial ribosomal protein bL20 family.

Its function is as follows. Binds directly to 23S ribosomal RNA and is necessary for the in vitro assembly process of the 50S ribosomal subunit. It is not involved in the protein synthesizing functions of that subunit. The chain is Large ribosomal subunit protein bL20 from Chlorobaculum parvum (strain DSM 263 / NCIMB 8327) (Chlorobium vibrioforme subsp. thiosulfatophilum).